The primary structure comprises 252 residues: Cell division protein ZapD (252 aa).

It belongs to the ZapD family. In terms of assembly, interacts with FtsZ.

It is found in the cytoplasm. Its function is as follows. Cell division factor that enhances FtsZ-ring assembly. Directly interacts with FtsZ and promotes bundling of FtsZ protofilaments, with a reduction in FtsZ GTPase activity. The sequence is that of Cell division protein ZapD from Cupriavidus metallidurans (strain ATCC 43123 / DSM 2839 / NBRC 102507 / CH34) (Ralstonia metallidurans).